The following is a 245-amino-acid chain: Phosducin (245 aa).

Positions 1–70 (MEKAKSQSLE…DKDSKERFSR (70 aa)) are disordered. The Phosducin domain maps to 1 to 244 (MEKAKSQSLE…LEQTNMEEDM (244 aa)). Basic and acidic residues-rich tracts occupy residues 28–50 (DWRK…KEIL) and 58–69 (SRDDKDSKERFS). S73 is subject to Phosphoserine; by PKA. A thioredoxin fold region spans residues 111–245 (YGFVYELESG…EQTNMEEDME (135 aa)).

The protein belongs to the phosducin family. Interacts with CRX. Forms a complex with the beta and gamma subunits of the GTP-binding protein, transducin. In terms of processing, light-induced changes in cyclic nucleotide levels modulate the phosphorylation of this protein by cAMP kinase.

The protein resides in the cytoplasm. It localises to the cytosol. Its subcellular location is the nucleus. The protein localises to the cell projection. It is found in the cilium. The protein resides in the photoreceptor outer segment. It localises to the photoreceptor inner segment. Inhibits the transcriptional activation activity of the cone-rod homeobox CRX. May participate in the regulation of visual phototransduction or in the integration of photoreceptor metabolism. The sequence is that of Phosducin (PDC) from Bos taurus (Bovine).